Here is a 545-residue protein sequence, read N- to C-terminus: Glucose-6-phosphate isomerase (545 aa).

The active-site Proton donor is glutamate 351. Active-site residues include histidine 382 and lysine 510.

This sequence belongs to the GPI family.

Its subcellular location is the cytoplasm. It catalyses the reaction alpha-D-glucose 6-phosphate = beta-D-fructose 6-phosphate. It functions in the pathway carbohydrate biosynthesis; gluconeogenesis. It participates in carbohydrate degradation; glycolysis; D-glyceraldehyde 3-phosphate and glycerone phosphate from D-glucose: step 2/4. Its function is as follows. Catalyzes the reversible isomerization of glucose-6-phosphate to fructose-6-phosphate. This Shewanella putrefaciens (strain CN-32 / ATCC BAA-453) protein is Glucose-6-phosphate isomerase.